Here is a 248-residue protein sequence, read N- to C-terminus: ATP synthase subunit a, chloroplastic (248 aa).

4 helical membrane-spanning segments follow: residues 34-54 (LHGQ…IFAL), 95-115 (VPYI…GALI), 134-154 (INVT…AGIS), and 203-223 (VFAL…GLFA).

The protein belongs to the ATPase A chain family. F-type ATPases have 2 components, CF(1) - the catalytic core - and CF(0) - the membrane proton channel. CF(1) has five subunits: alpha(3), beta(3), gamma(1), delta(1), epsilon(1). CF(0) has four main subunits: a, b, b' and c.

The protein resides in the plastid. Its subcellular location is the chloroplast thylakoid membrane. Key component of the proton channel; it plays a direct role in the translocation of protons across the membrane. In Guillardia theta (Cryptophyte), this protein is ATP synthase subunit a, chloroplastic.